The primary structure comprises 870 residues: Probable coatomer subunit gamma (870 aa).

HEAT repeat units lie at residues 60–97 (TEAT…VSDD), 99–133 (IIVT…TGML), 168–205 (EVVR…NDRL), 278–315 (SEIQ…AHPN), 316–350 (AVMS…GAES), and 389–425 (HTVM…ENPD).

The protein belongs to the COPG family. Oligomeric complex that consists of at least the alpha, beta, beta', gamma, delta, epsilon and zeta subunits.

The protein localises to the cytoplasm. Its subcellular location is the golgi apparatus membrane. It localises to the cytoplasmic vesicle. The protein resides in the COPI-coated vesicle membrane. Functionally, the coatomer is a cytosolic protein complex that binds to dilysine motifs and reversibly associates with Golgi non-clathrin-coated vesicles, which further mediate biosynthetic protein transport from the ER, via the Golgi up to the trans Golgi network. Coatomer complex is required for budding from Golgi membranes, and is essential for the retrograde Golgi-to-ER transport of dilysine-tagged proteins. The polypeptide is Probable coatomer subunit gamma (Caenorhabditis elegans).